Reading from the N-terminus, the 658-residue chain is Protein cueball (658 aa).

Topologically, residues 1–543 are extracellular; that stretch reads MSGVTARMEN…SYCKNSFNRT (543 aa). 2 N-linked (GlcNAc...) asparagine glycosylation sites follow: N25 and N122. 3 LDL-receptor class B repeats span residues 100–142, 152–195, and 196–241; these read RKLY…NHDL, RHLY…DHYS, and NRIY…NSRY. EGF-like domains follow at residues 352–384, 387–422, and 458–495; these read EIPI…FEGE, DRSK…KRCE, and EEYT…KRCE. Intrachain disulfides connect C356-C365, C360-C375, C391-C401, C395-C410, C412-C421, C462-C472, C466-C483, and C485-C494. 2 N-linked (GlcNAc...) asparagine glycosylation sites follow: N400 and N415. A glycan (N-linked (GlcNAc...) asparagine) is linked at N476. N541 carries an N-linked (GlcNAc...) asparagine glycan. The helical transmembrane segment at 544 to 564 threads the bilayer; that stretch reads VVYASLAFAASLFILMVILLI. The Cytoplasmic segment spans residues 565–658; sequence VRRFYEEGRP…SCAGGDKNLP (94 aa).

The protein belongs to the cueball family.

The protein localises to the cell membrane. Its function is as follows. Has a role in spermatogenesis and oogenesis. The polypeptide is Protein cueball (Culex quinquefasciatus (Southern house mosquito)).